Consider the following 100-residue polypeptide: Small ribosomal subunit protein uS14c (100 aa).

It belongs to the universal ribosomal protein uS14 family. Part of the 30S ribosomal subunit.

Its subcellular location is the plastid. The protein resides in the chloroplast. In terms of biological role, binds 16S rRNA, required for the assembly of 30S particles. This chain is Small ribosomal subunit protein uS14c, found in Emiliania huxleyi (Coccolithophore).